The sequence spans 424 residues: Serine--tRNA ligase (424 aa).

An L-serine-binding site is contributed by 232–234 (TAE). 263–265 (RQE) contacts ATP. An L-serine-binding site is contributed by Glu286. 350 to 353 (EIGS) contributes to the ATP binding site. Ser386 contributes to the L-serine binding site.

This sequence belongs to the class-II aminoacyl-tRNA synthetase family. Type-1 seryl-tRNA synthetase subfamily. In terms of assembly, homodimer. The tRNA molecule binds across the dimer.

It localises to the cytoplasm. The enzyme catalyses tRNA(Ser) + L-serine + ATP = L-seryl-tRNA(Ser) + AMP + diphosphate + H(+). The catalysed reaction is tRNA(Sec) + L-serine + ATP = L-seryl-tRNA(Sec) + AMP + diphosphate + H(+). The protein operates within aminoacyl-tRNA biosynthesis; selenocysteinyl-tRNA(Sec) biosynthesis; L-seryl-tRNA(Sec) from L-serine and tRNA(Sec): step 1/1. Functionally, catalyzes the attachment of serine to tRNA(Ser). Is also able to aminoacylate tRNA(Sec) with serine, to form the misacylated tRNA L-seryl-tRNA(Sec), which will be further converted into selenocysteinyl-tRNA(Sec). The chain is Serine--tRNA ligase from Onion yellows phytoplasma (strain OY-M).